The following is a 528-amino-acid chain: Equilibrative nucleoside transporter 4 (528 aa).

At 1–68 (MGSIGSQRLK…EEPVPDDRYH (68 aa)) the chain is on the extracellular side. The helical transmembrane segment at 69–89 (AIYFAMLLAGVGFLLPYNSFI) threads the bilayer. Residues 90–101 (TDVDYLHHKYPG) are Cytoplasmic-facing. Residues 102 to 122 (TSIVFDMSLTYILVALAAVLL) form a helical membrane-spanning segment. Over 123 to 139 (NNVVVERLNLHTRITTG) the chain is Extracellular. A helical membrane pass occupies residues 140–160 (YLLALGPLLFISICDVWLQLF). Residues 161–166 (SHDQAY) are Cytoplasmic-facing. Residues 167-187 (AINLAAVGTVAFGCTVQQSSF) traverse the membrane as a helical segment. Over 188–231 (YGYTGLLPKRYTQGVMTGESTAGVMISLSRILTKLLLPDERAST) the chain is Extracellular. A helical membrane pass occupies residues 232–252 (IIFFLVSAGLELLCFLLHLLV). The Cytoplasmic portion of the chain corresponds to 253-346 (RRSRFVLYYT…LLLHRYVVAR (94 aa)). A helical membrane pass occupies residues 347–367 (VIWADMLSIAVTYFITLCLFP). Over 368–376 (GLESEIRHC) the chain is Extracellular. Residues 377 to 397 (VLGEWLPILVMAVFNLSDFVG) traverse the membrane as a helical segment. At 398 to 411 (KILAALPVEWRGTH) the chain is on the cytoplasmic side. Residues 412–432 (LLACSCLRVVFIPLFILCVYP) form a helical membrane-spanning segment. Topologically, residues 433-445 (SGMPALRHPAWPC) are extracellular. A helical membrane pass occupies residues 446-466 (VFSLLMGISNGYFGSVPMILA). At 467–481 (AGKVSPKQRELAGNT) the chain is on the cytoplasmic side. Residues 482 to 504 (MTVSYMSGLTLGSAVAYCTYSLT) traverse the membrane as a helical segment. Over 505-528 (RDAHGSCFQTATAAAANDSIPVGP) the chain is Extracellular. The N-linked (GlcNAc...) asparagine glycan is linked to Asn521.

Belongs to the SLC29A/ENT transporter (TC 2.A.57) family. In terms of processing, N-glycosylated. In terms of tissue distribution, expressed in heart. Expressed in choroid plexus.

It is found in the cell membrane. Its subcellular location is the apical cell membrane. The catalysed reaction is serotonin(out) = serotonin(in). The enzyme catalyses dopamine(out) = dopamine(in). It carries out the reaction (R)-noradrenaline(out) = (R)-noradrenaline(in). It catalyses the reaction (R)-adrenaline(out) = (R)-adrenaline(in). The catalysed reaction is histamine(out) = histamine(in). The enzyme catalyses tyramine(in) = tyramine(out). It carries out the reaction guanidine(out) = guanidine(in). It catalyses the reaction adenine(out) = adenine(in). The catalysed reaction is adenosine(in) = adenosine(out). With respect to regulation, activated at acidic pH. Electrogenic voltage-dependent transporter that mediates the transport of a variety of endogenous bioactive amines, cationic xenobiotics and drugs. Utilizes the physiologic inside-negative membrane potential as a driving force to facilitate cellular uptake of organic cations. Functions as a Na(+)- and Cl(-)-independent bidirectional transporter. Substrate transport is pH-dependent and enhanced under acidic condition, which is most likely the result of allosteric changes in the transporter structure. Implicated in monoamine neurotransmitters uptake such as serotonin, dopamine, adrenaline/epinephrine, noradrenaline/norepinephrine, histamine and tyramine, thereby supporting a role in homeostatic regulation of aminergic neurotransmission in the central nervous system. Also responsible for the uptake of bioactive amines and drugs through the blood-cerebrospinal fluid (CSF) barrier, from the CSF into choroid plexus epithelial cells, thereby playing a significant role in the clearance of cationic neurotoxins, xenobiotics and metabolic waste in the brain. Involved in bidirectional transport of the purine nucleoside adenosine and plays a role in the regulation of extracellular adenosine concentrations in cardiac tissues, in particular during ischemia. May be involved in organic cation uptake from the tubular lumen into renal tubular cells, thereby contributing to organic cation reabsorption in the kidney. Also transports adenine and guanidine. This is Equilibrative nucleoside transporter 4 from Mus musculus (Mouse).